The chain runs to 431 residues: Maintenance of mitochondrial morphology protein 1 (431 aa).

Residues 1–103 (MVSALEVKSI…QLISWSFAQG (103 aa)) lie on the Lumenal side of the membrane. Residues 104 to 124 (LIIGQLSVVIFLIFFVKFFIF) form a helical membrane-spanning segment. Topologically, residues 125 to 431 (TDASSKMDNP…EDESSKTPHS (307 aa)) are cytoplasmic. The SMP-LTD domain occupies 192-404 (SAESLDWFNV…EPRFQSVKLP (213 aa)). The disordered stretch occupies residues 412–431 (NTREEVIHKTEDESSKTPHS).

The protein belongs to the MMM1 family. In terms of assembly, homodimer. Component of the ER-mitochondria encounter structure (ERMES) or MDM complex, composed of MMM1, MDM10, MDM12 and MDM34. An MMM1 homodimer associates with one molecule of MDM12 on each side in a pairwise head-to-tail manner, and the SMP-LTD domains of MMM1 and MDM12 generate a continuous hydrophobic tunnel for phospholipid trafficking.

It is found in the endoplasmic reticulum membrane. Component of the ERMES/MDM complex, which serves as a molecular tether to connect the endoplasmic reticulum (ER) and mitochondria. Components of this complex are involved in the control of mitochondrial shape and protein biogenesis, and function in nonvesicular lipid trafficking between the ER and mitochondria. The MDM12-MMM1 subcomplex functions in the major beta-barrel assembly pathway that is responsible for biogenesis of all outer membrane beta-barrel proteins, and acts in a late step after the SAM complex. The MDM10-MDM12-MMM1 subcomplex further acts in the TOM40-specific pathway after the action of the MDM12-MMM1 complex. Essential for establishing and maintaining the structure of mitochondria and maintenance of mtDNA nucleoids. This chain is Maintenance of mitochondrial morphology protein 1, found in Candida glabrata (strain ATCC 2001 / BCRC 20586 / JCM 3761 / NBRC 0622 / NRRL Y-65 / CBS 138) (Yeast).